The following is a 249-amino-acid chain: Isoprenyl transferase (249 aa).

Asp29 is an active-site residue. Residue Asp29 participates in Mg(2+) binding. Substrate contacts are provided by residues 30–33 (GNGR), Trp34, Arg42, His46, and 74–76 (STE). Asn77 functions as the Proton acceptor in the catalytic mechanism. Substrate-binding positions include Trp78, Arg80, Arg197, and 203–205 (RLS). Glu216 serves as a coordination point for Mg(2+).

The protein belongs to the UPP synthase family. As to quaternary structure, homodimer. Mg(2+) serves as cofactor.

Catalyzes the condensation of isopentenyl diphosphate (IPP) with allylic pyrophosphates generating different type of terpenoids. The polypeptide is Isoprenyl transferase (Trichormus variabilis (strain ATCC 29413 / PCC 7937) (Anabaena variabilis)).